Consider the following 341-residue polypeptide: Protein FAM50A (341 aa).

2 disordered regions span residues 1 to 27 and 80 to 147; these read MAQY…EREQ and LVKE…EIEE. A compositionally biased stretch (basic and acidic residues) spans 80–115; the sequence is LVKEREKQLAKKEQSKELQLKLEKQKEKKRKEEQKR. Over residues 125–147 the composition is skewed to acidic residues; the sequence is DEGEDEEEEEEEEEEEEEDEIEE.

It belongs to the FAM50 family.

It is found in the nucleus. In terms of biological role, probably involved in the regulation of pre-mRNA splicing. This Danio rerio (Zebrafish) protein is Protein FAM50A (fam50a).